Consider the following 211-residue polypeptide: Ribosomal RNA small subunit methyltransferase G (211 aa).

S-adenosyl-L-methionine is bound by residues Gly-73, Phe-78, and Arg-141.

The protein belongs to the methyltransferase superfamily. RNA methyltransferase RsmG family.

It localises to the cytoplasm. The enzyme catalyses guanosine(527) in 16S rRNA + S-adenosyl-L-methionine = N(7)-methylguanosine(527) in 16S rRNA + S-adenosyl-L-homocysteine. In terms of biological role, specifically methylates the N7 position of guanine in position 527 of 16S rRNA. In Jannaschia sp. (strain CCS1), this protein is Ribosomal RNA small subunit methyltransferase G.